The sequence spans 61 residues: Large ribosomal subunit protein bL28 (61 aa).

Belongs to the bacterial ribosomal protein bL28 family.

The protein is Large ribosomal subunit protein bL28 of Nocardioides sp. (strain ATCC BAA-499 / JS614).